The chain runs to 1057 residues: Carbamoyl phosphate synthase large chain (1057 aa).

The tract at residues 1-401 (MPKRNDIKTI…SLLKAIRSLE (401 aa)) is carboxyphosphate synthetic domain. Residues Arg129, Arg169, Gly175, Gly176, Lys208, Ile210, Glu215, Gly241, Ile242, His243, Gln284, and Glu298 each coordinate ATP. The ATP-grasp 1 domain maps to 133 to 327 (RTLMNDLNVP…IAKLAAKIAV (195 aa)). The Mg(2+) site is built by Gln284, Glu298, and Asn300. Residues Gln284, Glu298, and Asn300 each contribute to the Mn(2+) site. An oligomerization domain region spans residues 402 to 546 (YGVHHLGLPN…YGTYETENES (145 aa)). Residues 547-929 (IVTDKEKILV…ALFKGLTGSG (383 aa)) are carbamoyl phosphate synthetic domain. The 191-residue stretch at 671-861 (EALLRKINVP…MAQLAMRAII (191 aa)) folds into the ATP-grasp 2 domain. Positions 707, 746, 748, 752, 777, 778, 779, 780, 820, and 832 each coordinate ATP. Mg(2+) contacts are provided by Gln820, Glu832, and Asn834. Mn(2+) is bound by residues Gln820, Glu832, and Asn834. One can recognise an MGS-like domain in the interval 930–1057 (VEVKDHGTVL…ESMTFTMRQM (128 aa)). An allosteric domain region spans residues 930 to 1057 (VEVKDHGTVL…ESMTFTMRQM (128 aa)).

Belongs to the CarB family. Composed of two chains; the small (or glutamine) chain promotes the hydrolysis of glutamine to ammonia, which is used by the large (or ammonia) chain to synthesize carbamoyl phosphate. Tetramer of heterodimers (alpha,beta)4. It depends on Mg(2+) as a cofactor. Mn(2+) is required as a cofactor.

It catalyses the reaction hydrogencarbonate + L-glutamine + 2 ATP + H2O = carbamoyl phosphate + L-glutamate + 2 ADP + phosphate + 2 H(+). The enzyme catalyses hydrogencarbonate + NH4(+) + 2 ATP = carbamoyl phosphate + 2 ADP + phosphate + 2 H(+). Its pathway is amino-acid biosynthesis; L-arginine biosynthesis; carbamoyl phosphate from bicarbonate: step 1/1. It participates in pyrimidine metabolism; UMP biosynthesis via de novo pathway; (S)-dihydroorotate from bicarbonate: step 1/3. Functionally, large subunit of the glutamine-dependent carbamoyl phosphate synthetase (CPSase). CPSase catalyzes the formation of carbamoyl phosphate from the ammonia moiety of glutamine, carbonate, and phosphate donated by ATP, constituting the first step of 2 biosynthetic pathways, one leading to arginine and/or urea and the other to pyrimidine nucleotides. The large subunit (synthetase) binds the substrates ammonia (free or transferred from glutamine from the small subunit), hydrogencarbonate and ATP and carries out an ATP-coupled ligase reaction, activating hydrogencarbonate by forming carboxy phosphate which reacts with ammonia to form carbamoyl phosphate. The sequence is that of Carbamoyl phosphate synthase large chain from Staphylococcus aureus (strain MW2).